The chain runs to 395 residues: Flagellin A (395 aa).

It belongs to the bacterial flagellin family.

The protein localises to the secreted. The protein resides in the bacterial flagellum. In terms of biological role, flagellin is the subunit protein which polymerizes to form the filaments of bacterial flagella. Homomer of FlaA is able to form a functional filament. This is Flagellin A (flaA) from Rhizobium meliloti (Ensifer meliloti).